We begin with the raw amino-acid sequence, 83 residues long: Neurotoxin-1'' (83 aa).

Positions 1–19 (MNYLVMISLALLLMIGVES) are cleaved as a signal peptide. Positions 21 to 82 (RDGYIVYPNN…PIKDTSRKCT (62 aa)) constitute an LCN-type CS-alpha/beta domain. 4 disulfide bridges follow: Cys31–Cys81, Cys35–Cys53, Cys39–Cys63, and Cys43–Cys65. Arg83 is a propeptide (removed by a carboxypeptidase (in neurotoxin-1/1')).

The protein belongs to the long (4 C-C) scorpion toxin superfamily. Sodium channel inhibitor family. Alpha subfamily. As to expression, expressed by the venom gland.

It is found in the secreted. Alpha toxins bind voltage-independently at site-3 of sodium channels (Nav) and inhibit the inactivation of the activated channels, thereby blocking neuronal transmission. Is active against mammals and binds with high affinity rat brain synaptosomes. This chain is Neurotoxin-1'', found in Androctonus australis (Sahara scorpion).